The chain runs to 38 residues: Putative ORF10 protein (38 aa).

In terms of assembly, binds host ZYG11B. This would not play any role in SARS-CoV-2 infection.

In Severe acute respiratory syndrome coronavirus 2 (2019-nCoV), this protein is Putative ORF10 protein.